Here is a 466-residue protein sequence, read N- to C-terminus: Cysteine--tRNA ligase (466 aa).

Residue Cys-28 coordinates Zn(2+). Residues 30-40 (PTVYNYIHIGN) carry the 'HIGH' region motif. Zn(2+) contacts are provided by Cys-208, His-233, and Glu-237. Positions 265 to 269 (KMSKS) match the 'KMSKS' region motif. Lys-268 is an ATP binding site. At Ser-269 the chain carries Phosphoserine.

This sequence belongs to the class-I aminoacyl-tRNA synthetase family. As to quaternary structure, monomer. The cofactor is Zn(2+).

The protein localises to the cytoplasm. The catalysed reaction is tRNA(Cys) + L-cysteine + ATP = L-cysteinyl-tRNA(Cys) + AMP + diphosphate. This is Cysteine--tRNA ligase from Shouchella clausii (strain KSM-K16) (Alkalihalobacillus clausii).